The chain runs to 178 residues: Oligoribonuclease (178 aa).

An Exonuclease domain is found at 7-168 (LIWIDLEMTG…DDIRESIAEL (162 aa)). Tyrosine 128 is an active-site residue.

Belongs to the oligoribonuclease family.

The protein localises to the cytoplasm. Its function is as follows. 3'-to-5' exoribonuclease specific for small oligoribonucleotides. The chain is Oligoribonuclease from Francisella tularensis subsp. holarctica (strain FTNF002-00 / FTA).